A 571-amino-acid polypeptide reads, in one-letter code: Glutamine--tRNA ligase (571 aa).

The 'HIGH' region signature appears at 35 to 45 (PEPNGYLHIGH). ATP-binding positions include 36–38 (EPN) and 42–48 (HIGHAKS). L-glutamine is bound by residues aspartate 68 and tyrosine 213. ATP-binding positions include threonine 232, 262–263 (RL), and 270–272 (LSK). The short motif at 269-273 (ILSKR) is the 'KMSKS' region element.

This sequence belongs to the class-I aminoacyl-tRNA synthetase family. In terms of assembly, monomer.

The protein resides in the cytoplasm. It catalyses the reaction tRNA(Gln) + L-glutamine + ATP = L-glutaminyl-tRNA(Gln) + AMP + diphosphate. This Buchnera aphidicola subsp. Acyrthosiphon pisum (strain 5A) protein is Glutamine--tRNA ligase.